Consider the following 149-residue polypeptide: Small ribosomal subunit protein uS17c (149 aa).

Residues 1–49 (MITSSLTSSLQALKLSSPFAHGSTPLSSLSKPNSFPNHRMPALVPVIRA) constitute a chloroplast transit peptide.

It belongs to the universal ribosomal protein uS17 family. Part of the 30S ribosomal subunit.

It localises to the plastid. Its subcellular location is the chloroplast. Functionally, one of the primary rRNA binding proteins, it binds specifically to the 5'-end of 16S ribosomal RNA. Required for optimal plastid performance in terms of photosynthesis and growth. Required for the translation of plastid mRNAs. Plays a critical role in biosynthesis of thylakoid membrane proteins encoded by chloroplast genes. This is Small ribosomal subunit protein uS17c (RPS17) from Arabidopsis thaliana (Mouse-ear cress).